Here is a 471-residue protein sequence, read N- to C-terminus: Serine/threonine-protein kinase sid1 (471 aa).

The Protein kinase domain maps to 9–260 (YTLLRKLGSG…AKELLQHPFI (252 aa)). Residues 15–23 (LGSGSFGVV) and Lys38 each bind ATP. Asp129 serves as the catalytic Proton acceptor.

It belongs to the protein kinase superfamily. STE Ser/Thr protein kinase family. STE20 subfamily. Interacts with cdc14.

It is found in the cytoplasm. The protein localises to the cytoskeleton. The protein resides in the microtubule organizing center. Its subcellular location is the spindle pole body. The catalysed reaction is L-seryl-[protein] + ATP = O-phospho-L-seryl-[protein] + ADP + H(+). It carries out the reaction L-threonyl-[protein] + ATP = O-phospho-L-threonyl-[protein] + ADP + H(+). Its function is as follows. Has a role in the septation initiation network (SIN) required for cytokinesis. The protein is Serine/threonine-protein kinase sid1 (sid1) of Schizosaccharomyces pombe (strain 972 / ATCC 24843) (Fission yeast).